A 142-amino-acid polypeptide reads, in one-letter code: Protein tost-1 (142 aa).

The tract at residues 97 to 123 (KVFEEEDKENAPTKKAVLKPSSTDEKK) is disordered.

In terms of assembly, component of the tost-1 variant of the PETISCO complex (also called the pid-3, erh-2, tofu-6, and ife-3 small RNA complex) containing at least tost-1, tofu-6, ife-3, pid-3, and erh-2, which plays an essential role in embryogenesis. Within the complex interacts with erh-2. Within the complex interacts with pid-3 and tofu-6. In contrast to the pid-1 variant of the PETISCO complex, the tost-1 variant of the PETISCO complex plays a minor role in the biogenesis of a class of 21 nucleotide PIWI-interacting RNAs (piRNAs) that possess a uracil residue at the 5'-end (also called 21U-RNAs). Expressed in the germline.

It is found in the cytoplasm. The protein resides in the nucleus. Component of the tost-1 variant of the PETISCO complex which plays an essential role in embryogenesis. Within the complex acts as an adapter which binds to the complex via erh-2. Does not seem to play a role in the biogenesis of a class of 21 nucleotide PIWI-interacting RNAs (piRNAs) that possess a uracil residue at the 5'-end (also called 21U-RNAs). May inhibit 21U-RNA accumulation. Required for chromosome segregation and cell division in early embryos. The polypeptide is Protein tost-1 (Caenorhabditis elegans).